A 108-amino-acid chain; its full sequence is DNA-binding protein HBbu (108 aa).

This sequence belongs to the bacterial histone-like protein family.

Histone-like DNA-binding protein which is capable of wrapping DNA to stabilize it, and thus to prevent its denaturation under extreme environmental conditions. The protein is DNA-binding protein HBbu (hbb) of Borrelia turicatae.